The sequence spans 612 residues: Dihydroxy-acid dehydratase (612 aa).

D81 contacts Mg(2+). C122 serves as a coordination point for [2Fe-2S] cluster. Positions 123 and 124 each coordinate Mg(2+). An N6-carboxylysine modification is found at K124. C196 provides a ligand contact to [2Fe-2S] cluster. E492 serves as a coordination point for Mg(2+). S518 functions as the Proton acceptor in the catalytic mechanism.

This sequence belongs to the IlvD/Edd family. As to quaternary structure, homodimer. [2Fe-2S] cluster serves as cofactor. It depends on Mg(2+) as a cofactor.

The catalysed reaction is (2R)-2,3-dihydroxy-3-methylbutanoate = 3-methyl-2-oxobutanoate + H2O. It catalyses the reaction (2R,3R)-2,3-dihydroxy-3-methylpentanoate = (S)-3-methyl-2-oxopentanoate + H2O. It participates in amino-acid biosynthesis; L-isoleucine biosynthesis; L-isoleucine from 2-oxobutanoate: step 3/4. The protein operates within amino-acid biosynthesis; L-valine biosynthesis; L-valine from pyruvate: step 3/4. Functionally, functions in the biosynthesis of branched-chain amino acids. Catalyzes the dehydration of (2R,3R)-2,3-dihydroxy-3-methylpentanoate (2,3-dihydroxy-3-methylvalerate) into 2-oxo-3-methylpentanoate (2-oxo-3-methylvalerate) and of (2R)-2,3-dihydroxy-3-methylbutanoate (2,3-dihydroxyisovalerate) into 2-oxo-3-methylbutanoate (2-oxoisovalerate), the penultimate precursor to L-isoleucine and L-valine, respectively. This Cereibacter sphaeroides (strain ATCC 17029 / ATH 2.4.9) (Rhodobacter sphaeroides) protein is Dihydroxy-acid dehydratase.